Consider the following 339-residue polypeptide: Uroporphyrinogen decarboxylase (339 aa).

Substrate is bound by residues 21-25 (RQAGR), D71, Y147, S202, and H315.

It belongs to the uroporphyrinogen decarboxylase family. As to quaternary structure, homodimer.

The protein localises to the cytoplasm. It carries out the reaction uroporphyrinogen III + 4 H(+) = coproporphyrinogen III + 4 CO2. The protein operates within porphyrin-containing compound metabolism; protoporphyrin-IX biosynthesis; coproporphyrinogen-III from 5-aminolevulinate: step 4/4. Catalyzes the decarboxylation of four acetate groups of uroporphyrinogen-III to yield coproporphyrinogen-III. The polypeptide is Uroporphyrinogen decarboxylase (Helicobacter acinonychis (strain Sheeba)).